We begin with the raw amino-acid sequence, 510 residues long: NAD(P)H-quinone oxidoreductase subunit 2, chloroplastic (510 aa).

12 helical membrane-spanning segments follow: residues 24 to 44, 59 to 79, 99 to 119, 124 to 144, 149 to 169, 183 to 203, 229 to 249, 295 to 315, 323 to 343, 347 to 367, 395 to 415, and 418 to 438; these read LLLF…GLIL, WFYF…LFRW, IFQF…VEYI, MAIT…MFLC, LITI…LSGY, YLLM…WLYG, ISIA…PAPF, WHLL…LIAI, MLAY…IVGD, GYAS…GTFA, ALSS…AGFF, and LHLF…IGLL.

This sequence belongs to the complex I subunit 2 family. As to quaternary structure, NDH is composed of at least 16 different subunits, 5 of which are encoded in the nucleus.

It localises to the plastid. Its subcellular location is the chloroplast thylakoid membrane. It carries out the reaction a plastoquinone + NADH + (n+1) H(+)(in) = a plastoquinol + NAD(+) + n H(+)(out). It catalyses the reaction a plastoquinone + NADPH + (n+1) H(+)(in) = a plastoquinol + NADP(+) + n H(+)(out). In terms of biological role, NDH shuttles electrons from NAD(P)H:plastoquinone, via FMN and iron-sulfur (Fe-S) centers, to quinones in the photosynthetic chain and possibly in a chloroplast respiratory chain. The immediate electron acceptor for the enzyme in this species is believed to be plastoquinone. Couples the redox reaction to proton translocation, and thus conserves the redox energy in a proton gradient. This is NAD(P)H-quinone oxidoreductase subunit 2, chloroplastic from Allium textile (Textile onion).